The sequence spans 139 residues: Large ribosomal subunit protein bL17 (139 aa).

This sequence belongs to the bacterial ribosomal protein bL17 family. As to quaternary structure, part of the 50S ribosomal subunit. Contacts protein L32.

The protein is Large ribosomal subunit protein bL17 of Myxococcus xanthus (strain DK1622).